The sequence spans 187 residues: Ribosome maturation factor RimM (187 aa).

The 77-residue stretch at 111-187 (KDEYYWVDLI…RILVDWQADF (77 aa)) folds into the PRC barrel domain.

Belongs to the RimM family. In terms of assembly, binds ribosomal protein uS19.

The protein localises to the cytoplasm. In terms of biological role, an accessory protein needed during the final step in the assembly of 30S ribosomal subunit, possibly for assembly of the head region. Essential for efficient processing of 16S rRNA. May be needed both before and after RbfA during the maturation of 16S rRNA. It has affinity for free ribosomal 30S subunits but not for 70S ribosomes. The sequence is that of Ribosome maturation factor RimM from Albidiferax ferrireducens (strain ATCC BAA-621 / DSM 15236 / T118) (Rhodoferax ferrireducens).